The sequence spans 188 residues: NAD(P)H-quinone oxidoreductase subunit J (188 aa).

Belongs to the complex I 30 kDa subunit family. NDH-1 can be composed of about 15 different subunits; different subcomplexes with different compositions have been identified which probably have different functions.

It is found in the cellular thylakoid membrane. It catalyses the reaction a plastoquinone + NADH + (n+1) H(+)(in) = a plastoquinol + NAD(+) + n H(+)(out). The enzyme catalyses a plastoquinone + NADPH + (n+1) H(+)(in) = a plastoquinol + NADP(+) + n H(+)(out). Its function is as follows. NDH-1 shuttles electrons from an unknown electron donor, via FMN and iron-sulfur (Fe-S) centers, to quinones in the respiratory and/or the photosynthetic chain. The immediate electron acceptor for the enzyme in this species is believed to be plastoquinone. Couples the redox reaction to proton translocation, and thus conserves the redox energy in a proton gradient. Cyanobacterial NDH-1 also plays a role in inorganic carbon-concentration. The sequence is that of NAD(P)H-quinone oxidoreductase subunit J from Parasynechococcus marenigrum (strain WH8102).